The chain runs to 161 residues: Nucleotide-binding protein Rmet_2899 (161 aa).

The protein belongs to the YajQ family.

In terms of biological role, nucleotide-binding protein. The sequence is that of Nucleotide-binding protein Rmet_2899 from Cupriavidus metallidurans (strain ATCC 43123 / DSM 2839 / NBRC 102507 / CH34) (Ralstonia metallidurans).